A 201-amino-acid polypeptide reads, in one-letter code: Ribosomal RNA small subunit methyltransferase G (201 aa).

S-adenosyl-L-methionine contacts are provided by residues glycine 71, phenylalanine 76, 120-121 (LE), and arginine 134.

This sequence belongs to the methyltransferase superfamily. RNA methyltransferase RsmG family.

It localises to the cytoplasm. The enzyme catalyses guanosine(527) in 16S rRNA + S-adenosyl-L-methionine = N(7)-methylguanosine(527) in 16S rRNA + S-adenosyl-L-homocysteine. In terms of biological role, specifically methylates the N7 position of guanine in position 527 of 16S rRNA. This chain is Ribosomal RNA small subunit methyltransferase G, found in Rhodospirillum rubrum (strain ATCC 11170 / ATH 1.1.1 / DSM 467 / LMG 4362 / NCIMB 8255 / S1).